The sequence spans 376 residues: Glutamate 5-kinase (376 aa).

ATP is bound at residue Lys-18. Substrate contacts are provided by Ser-58, Asp-145, and Asn-157. ATP-binding positions include 177–178 (SD) and 218–224 (TGGMASK). In terms of domain architecture, PUA spans 280-358 (TGALTLDAGA…SELPGELRRP (79 aa)).

This sequence belongs to the glutamate 5-kinase family.

The protein resides in the cytoplasm. It catalyses the reaction L-glutamate + ATP = L-glutamyl 5-phosphate + ADP. It functions in the pathway amino-acid biosynthesis; L-proline biosynthesis; L-glutamate 5-semialdehyde from L-glutamate: step 1/2. Catalyzes the transfer of a phosphate group to glutamate to form L-glutamate 5-phosphate. The polypeptide is Glutamate 5-kinase (Mycobacterium tuberculosis (strain ATCC 25177 / H37Ra)).